The sequence spans 554 residues: Macrophage colony-stimulating factor 1 (554 aa).

The N-terminal stretch at 1 to 32 is a signal peptide; it reads MTAPGAAGRCPPTTWLGSLLLLVCLLASRSIT. Residues 33-496 are Lumenal-facing; it reads EEVSEYCSHM…GSFSPQLQES (464 aa). 3 disulfides stabilise this stretch: C39–C122, C80–C171, and C134–C178. N-linked (GlcNAc...) asparagine glycans are attached at residues N154 and N172. The disordered stretch occupies residues 224–488; it reads EDSEGTEGSS…TGHERQSEGS (265 aa). T266 is modified (phosphothreonine; by FAM20C). O-linked (Xyl...) (chondroitin sulfate) serine glycosylation occurs at S309. The segment covering 344–354 has biased composition (low complexity); sequence LSASSPLPASA. O-linked (GalNAc...) threonine glycosylation is found at T363 and T365. Over residues 404–433 the composition is skewed to polar residues; the sequence is RISSLRPQGLSNPSTLSAQPQLSRSHSSGS. The interval 406-426 is O-glycosylated at one site; it reads SSLRPQGLSNPSTLSAQPQLS. Basic and acidic residues predominate over residues 440-453; sequence LEGRRSTRDRRSPA. Residues 497–517 traverse the membrane as a helical segment; the sequence is VFHLLVPSVILVLLAVGGLLF. Residues 518–554 are Cytoplasmic-facing; the sequence is YRWRRRSHQEPQRADSPLEQPEGSPLTQDDRQVELPV. Residues 526 to 554 are disordered; it reads QEPQRADSPLEQPEGSPLTQDDRQVELPV. The span at 545-554 shows a compositional bias: basic and acidic residues; the sequence is QDDRQVELPV.

In terms of assembly, homodimer or heterodimer; disulfide-linked. Likely to exist in multiple forms: homodimer consisting of 2 identical 150-200 kDa proteoglycan subunits, heterodimer consisting of a 150-200 kDa proteoglycan subunit and a truncated 43 kDa subunit, and homodimer consisting of 2 identical 43 kDa subunits. Interacts with CSF1R. In terms of processing, N-glycosylated. Post-translationally, O-glycosylated; contains chondroitin sulfate. O-glycosylated with core 1 or possibly core 8 glycans. O-glycosylated.

The protein resides in the cell membrane. It is found in the secreted. The protein localises to the extracellular space. Cytokine that plays an essential role in the regulation of survival, proliferation and differentiation of hematopoietic precursor cells, especially mononuclear phagocytes, such as macrophages and monocytes. Promotes the release of pro-inflammatory chemokines, and thereby plays an important role in innate immunity and in inflammatory processes. Plays an important role in the regulation of osteoclast proliferation and differentiation, the regulation of bone resorption, and is required for normal bone development. Required for normal male and female fertility. Promotes reorganization of the actin cytoskeleton, regulates formation of membrane ruffles, cell adhesion and cell migration. Plays a role in lipoprotein clearance. The chain is Macrophage colony-stimulating factor 1 (CSF1) from Homo sapiens (Human).